The following is a 232-amino-acid chain: Rho-related GTP-binding protein Rho6 (232 aa).

Residues 23–28, 38–45, 67–71, 125–128, and 169–170 each bind GTP; these read QCGKTA, YPETYVPT, DTSGS, CKTD, and AF. Residues 42–50 carry the Effector region motif; the sequence is YVPTVFENY. Cys229 carries the post-translational modification Cysteine methyl ester. Cys229 is lipidated: S-geranylgeranyl cysteine. Residues 230–232 constitute a propeptide, removed in mature form; it reads SIM.

The protein belongs to the small GTPase superfamily. Rho family. Binds GRB7 and PLXNB1. Interacts with UBXD5. Interacts with PLXNA2. Mostly expressed in brain and liver.

The protein localises to the cell membrane. It is found in the cytoplasm. Its subcellular location is the cytoskeleton. Its function is as follows. Lacks intrinsic GTPase activity. Has a low affinity for GDP, and constitutively binds GTP. Controls rearrangements of the actin cytoskeleton. Induces the Rac-dependent neuritic process formation in part by disruption of the cortical actin filaments. Causes the formation of many neuritic processes from the cell body with disruption of the cortical actin filaments. This chain is Rho-related GTP-binding protein Rho6 (RND1), found in Homo sapiens (Human).